A 428-amino-acid polypeptide reads, in one-letter code: MKKKLNLCPKGTYDFFGQGAKIFIDVRKVFFNQAKKFNFSYIETPIFEYANIFLTTNQIADIVSKELYKFFDKSGRELALRPEGTAPIMRSVAQHKLFQTEKKFFYFGPMFRYENPQKGRFRQFYQAGFEIINYKKDSLEFQILEIILLIKSIFKDLGINEYEIKINFLSNLTTRNIYKKNLAQYFEKFSDKLEPISKIRIKKNPLRILDDKIEQEKEFVKLAPKINTFWTMEDKNIFNRITSILEEFKIIYKVDYNLVRGLDYYDDFVFEFIDTSQTLGTKLALVGGGCYNNLPTKFGLNNFKSIGMAFGIERLIEIIKSKKNIKEQNLDFFLLSFTDKEILLNFKLAKILRKENFLVDLNKTPFSVSKGFQLAKKSGAKFVFFFEKNQAKNYISLKNLQTGKNEQILYTEINFEYLNSIIKASENA.

Belongs to the class-II aminoacyl-tRNA synthetase family. Homodimer.

It is found in the cytoplasm. The catalysed reaction is tRNA(His) + L-histidine + ATP = L-histidyl-tRNA(His) + AMP + diphosphate + H(+). The polypeptide is Histidine--tRNA ligase (Mesomycoplasma hyopneumoniae (strain 232) (Mycoplasma hyopneumoniae)).